The sequence spans 129 residues: MSEETEDIWGIAHVHASFNNTIITITDQTGAETLAKSSGGTVVKQNRDEASPYAAMQMAEVVAEKALDRGVEGVDVRVRGPGGNLQTSPGPGAQATIRALARAGLEIGRIEDVTPTPHDGTRAPKNSGF.

It belongs to the universal ribosomal protein uS11 family. In terms of assembly, part of the 30S ribosomal subunit.

Functionally, located on the platform of the 30S subunit. This chain is Small ribosomal subunit protein uS11, found in Haloarcula marismortui (strain ATCC 43049 / DSM 3752 / JCM 8966 / VKM B-1809) (Halobacterium marismortui).